Reading from the N-terminus, the 377-residue chain is Protein-tyrosine sulfotransferase 2 (377 aa).

At 1-8 (MRLSVRRV) the chain is on the cytoplasmic side. The chain crosses the membrane as a helical; Signal-anchor for type II membrane protein span at residues 9–25 (LLAAGCALVLVLAVQLG). Residues 26–377 (QQVLECRAVL…NSTSSHLGSS (352 aa)) lie on the Lumenal side of the membrane. 78 to 82 (RSGTT) serves as a coordination point for 3'-phosphoadenylyl sulfate. Cys-96 and Cys-156 form a disulfide bridge. Glu-99 acts as the Proton donor/acceptor in catalysis. Positions 101–105 (RIIPR) are interaction with peptide substrate. Positions 183, 191, and 195 each coordinate 3'-phosphoadenylyl sulfate. Residues Cys-225 and Cys-233 are joined by a disulfide bond. 3'-phosphoadenylyl sulfate-binding positions include Tyr-238, 285–294 (STDQVIKPVN), and Lys-300. N-linked (GlcNAc...) asparagine glycosylation is found at Asn-343 and Asn-368.

Belongs to the protein sulfotransferase family. Homodimer. Can also form heterodimers with TPST1. N-glycosylated. Widely expressed.

It localises to the golgi apparatus membrane. It carries out the reaction L-tyrosyl-[protein] + 3'-phosphoadenylyl sulfate = O-sulfo-L-tyrosine-[protein] + adenosine 3',5'-bisphosphate + H(+). Its function is as follows. Catalyzes the O-sulfation of tyrosine residues within acidic motifs of polypeptides, using 3'-phosphoadenylyl sulfate (PAPS) as cosubstrate. In Homo sapiens (Human), this protein is Protein-tyrosine sulfotransferase 2 (TPST2).